Reading from the N-terminus, the 365-residue chain is MTQQTPLFAQHQASGARMVDFHGWMMPLHYGSQMDEHHAVRRDAGMFDVSHMTIVDLHGARTREFLRYLLANDVAKLTQPGKALYSAMLNASAGVIDDLIVYFISEDFFRLVVNSATREKDLAWIVEHAAAYGVQLTERDDLSLIAVQGPNAQQKAQSVFDDAQRDAVSAMKPFFGVQAGELFIATTGYTGEPGYEIALPNELAAEFWQQLLAAGVRPAGLGARDTLRLEAGMNLYGQEMDEKVSPLAANMSWTIGWEPSDRQFIGREMLEIQRTKGTERLVGLIMTEKGVLRNALPVRFSDADGNMLEGVITSGSFSPTLGCSIALARVPAGIGEQAVVQIRNRAMPVTVTKPVFVRAGKPVTN.

The protein belongs to the GcvT family. The glycine cleavage system is composed of four proteins: P, T, L and H.

The catalysed reaction is N(6)-[(R)-S(8)-aminomethyldihydrolipoyl]-L-lysyl-[protein] + (6S)-5,6,7,8-tetrahydrofolate = N(6)-[(R)-dihydrolipoyl]-L-lysyl-[protein] + (6R)-5,10-methylene-5,6,7,8-tetrahydrofolate + NH4(+). Its function is as follows. The glycine cleavage system catalyzes the degradation of glycine. In Erwinia tasmaniensis (strain DSM 17950 / CFBP 7177 / CIP 109463 / NCPPB 4357 / Et1/99), this protein is Aminomethyltransferase.